A 509-amino-acid chain; its full sequence is Maturase K (509 aa).

It belongs to the intron maturase 2 family. MatK subfamily.

The protein resides in the plastid. The protein localises to the chloroplast. In terms of biological role, usually encoded in the trnK tRNA gene intron. Probably assists in splicing its own and other chloroplast group II introns. This chain is Maturase K, found in Nicotiana clevelandii (Wild tobacco).